The chain runs to 126 residues: Chemocyanin (126 aa).

The N-terminal stretch at 1–30 (MAQGSGSAERALVLGVVLVFLVFNCEVAES) is a signal peptide. The region spanning 31–126 (VVYTVGDGGG…GGLKIAVTAA (96 aa)) is the Phytocyanin domain. Cu cation-binding residues include H69, C109, and H114. An intrachain disulfide couples C82 to C115.

Strongly expressed in stigma and style and to a lesser extent in leaves, ovary and petals. Not detected in pollen tubes, mature anthers or roots.

Diffusible chemotropic factor that induces pollen tube chemotropism. The polypeptide is Chemocyanin (Lilium longiflorum (Trumpet lily)).